The primary structure comprises 150 residues: Avidin-related protein 7 (150 aa).

The N-terminal stretch at 1-24 (MVHATSPLLLLLLLSLALVAPGLS) is a signal peptide. The Avidin-like domain maps to 26–147 (RKCSLTGEWD…GYNNFTRQRT (122 aa)). Cysteine 28 and cysteine 105 are oxidised to a cystine. Biotin is bound by residues asparagine 36 and serine 40. N-linked (GlcNAc...) asparagine glycans are attached at residues asparagine 41 and asparagine 54. Biotin-binding residues include tyrosine 57, threonine 59, and aspartate 63. Asparagine 93 carries an N-linked (GlcNAc...) asparagine glycan. Serine 95, serine 99, and asparagine 140 together coordinate biotin. A glycan (N-linked (GlcNAc...) asparagine) is linked at asparagine 141.

The protein belongs to the avidin/streptavidin family. As to quaternary structure, homotetramer. Glycosylated.

The protein resides in the secreted. Forms a strong non-covalent specific complex with biotin. This is Avidin-related protein 7 (AVR7) from Gallus gallus (Chicken).